The following is a 1254-amino-acid chain: Juxtamembrane domain-associated catenin (1254 aa).

Disordered regions lie at residues 1-38, 84-106, and 145-209; these read MISSGWMQEMEPIPEEGTEADGSEWGAMSDTAKRTMRK, AGPTSARGSSYSYSYESHYDNPP, and PYSN…SAPG. The span at 12-22 shows a compositional bias: acidic residues; it reads PIPEEGTEADG. A compositionally biased stretch (polar residues) spans 145–157; the sequence is PYSNIDFDSSGLP. Fibronectin type-III domains are found at residues 207–302, 315–411, 428–518, and 530–624; these read APGV…IPIS, APGR…IRPA, PPGQ…LRPT, and ILEA…IEPS. A disordered region spans residues 412–433; sequence APQRHVPARKVSESVQPPGQPQ. The tract at residues 662-685 is disordered; the sequence is MVRESPPLPERDDSPPPLRRANNN. ARM repeat units follow at residues 733-775, 777-820, 874-922, 969-1012, and 1016-1058; these read GGIP…AVME, DGVR…ESAT, NLIE…YDPA, HVVK…RAAV, and KGLP…KYAL. The segment at 920–960 is disordered; that stretch reads DPAAAHSSSSKNMKHVASPKPEKKKKDKEKKKDKNPKNIVT. Residues 1159–1254 form a disordered region; it reads GTARRGDSST…GGGNIDDSWV (96 aa). The span at 1166 to 1176 shows a compositional bias: polar residues; that stretch reads SSTLARPISSQ. Basic and acidic residues predominate over residues 1177 to 1187; it reads GRERPSMHQLD.

The protein belongs to the beta-catenin family. Associated with the catenin-cadherin complex consisting of hmr-1, hmp-1 and hmp-2. Interacts with hmr-1. Interacts with picc-1. Epidermal cells.

The protein resides in the cell junction. It is found in the adherens junction. The protein localises to the nucleus. Functionally, may act as a positive modulator of hmr-1 function during epidermal morphogenesis. Required for proper localization of other junctional components, such as pac-1. This Caenorhabditis elegans protein is Juxtamembrane domain-associated catenin (jac-1).